A 211-amino-acid chain; its full sequence is MKMIIQIFFIISLISTISFASVQDFCVADPKGPQSPSGYSCKNPDQVTENDFAFTGLGTAGNTSNIIKAAVTPAFAPAYAGINGLGVSLARLDLAGGGVIPLHTHPGASEVLVVIQGTICAGFISSANKVYLKTLNRGDSMVFPQGLLHFQLNSGKGPALAFVAFGSSSPGLQILPFALFANDLPSELVEATTFLSDAEVKKLKGVLGGTN.

A signal peptide spans 1 to 20 (MKMIIQIFFIISLISTISFA). Cys-26 and Cys-41 are disulfide-bonded. A Cupin type-1 domain is found at 55–201 (TGLGTAGNTS…TTFLSDAEVK (147 aa)). An N-linked (GlcNAc...) asparagine glycan is attached at Asn-62. Positions 103, 105, and 110 each coordinate Mn(2+). Phosphoserine is present on Ser-140. His-149 provides a ligand contact to Mn(2+).

This sequence belongs to the germin family. In terms of assembly, oligomer (believed to be a pentamer but probably hexamer). Expressed in leaves and flowers.

It localises to the secreted. The protein localises to the extracellular space. Its subcellular location is the apoplast. Its function is as follows. May play a role in plant defense. Probably has no oxalate oxidase activity even if the active site is conserved. The sequence is that of Germin-like protein subfamily 3 member 3 (GER3) from Arabidopsis thaliana (Mouse-ear cress).